A 76-amino-acid polypeptide reads, in one-letter code: NADH dehydrogenase [ubiquinone] 1 subunit C1, mitochondrial (76 aa).

The N-terminal 27 residues, 1 to 27, are a transit peptide targeting the mitochondrion; it reads MAPSVVLRSFSRLLAPARLPSCSSTRS. Residues 40 to 59 form a helical membrane-spanning segment; it reads NWLAVGLSVGASVFMWIYLI.

Belongs to the complex I NDUFC1 subunit family. Complex I is composed of 45 different subunits.

It is found in the mitochondrion inner membrane. Its function is as follows. Accessory subunit of the mitochondrial membrane respiratory chain NADH dehydrogenase (Complex I), that is believed not to be involved in catalysis. Complex I functions in the transfer of electrons from NADH to the respiratory chain. The immediate electron acceptor for the enzyme is believed to be ubiquinone. The polypeptide is NADH dehydrogenase [ubiquinone] 1 subunit C1, mitochondrial (Ndufc1) (Mus musculus (Mouse)).